We begin with the raw amino-acid sequence, 376 residues long: Succinyl-diaminopimelate desuccinylase (376 aa).

Histidine 67 provides a ligand contact to Zn(2+). Aspartate 69 is an active-site residue. Residue aspartate 100 coordinates Zn(2+). The active-site Proton acceptor is the glutamate 134. Zn(2+)-binding residues include glutamate 135, glutamate 163, and histidine 349.

The protein belongs to the peptidase M20A family. DapE subfamily. As to quaternary structure, homodimer. The cofactor is Zn(2+). It depends on Co(2+) as a cofactor.

It carries out the reaction N-succinyl-(2S,6S)-2,6-diaminopimelate + H2O = (2S,6S)-2,6-diaminopimelate + succinate. Its pathway is amino-acid biosynthesis; L-lysine biosynthesis via DAP pathway; LL-2,6-diaminopimelate from (S)-tetrahydrodipicolinate (succinylase route): step 3/3. Catalyzes the hydrolysis of N-succinyl-L,L-diaminopimelic acid (SDAP), forming succinate and LL-2,6-diaminopimelate (DAP), an intermediate involved in the bacterial biosynthesis of lysine and meso-diaminopimelic acid, an essential component of bacterial cell walls. The chain is Succinyl-diaminopimelate desuccinylase from Pseudoalteromonas translucida (strain TAC 125).